A 387-amino-acid chain; its full sequence is Muscleblind-like protein 1 (387 aa).

T6 carries the phosphothreonine modification. 4 C3H1-type zinc fingers span residues W13 to K41, N47 to P73, T178 to D206, and D214 to A240.

It belongs to the muscleblind family. As to quaternary structure, interacts with DDX1 and YBX1. Interacts with HNRNPH1; the interaction in RNA-independent. Interacts with RBPMS; the interaction allows cooperative assembly of RNA-bound stable cell-specific alternative splicing regulatory complexes.

It is found in the nucleus. It localises to the cytoplasm. Its subcellular location is the cytoplasmic granule. Its function is as follows. Mediates pre-mRNA alternative splicing regulation. Acts either as activator or repressor of splicing on specific pre-mRNA targets. Inhibits cardiac troponin-T (TNNT2) pre-mRNA exon inclusion but induces insulin receptor (IR) pre-mRNA exon inclusion in muscle. Antagonizes the alternative splicing activity pattern of CELF proteins. Regulates the TNNT2 exon 5 skipping through competition with U2AF2. Inhibits the formation of the spliceosome A complex on intron 4 of TNNT2 pre-mRNA. Binds to the stem-loop structure within the polypyrimidine tract of TNNT2 intron 4 during spliceosome assembly. Binds to the 5'-YGCU(U/G)Y-3'consensus sequence. Binds to the IR RNA. Binds to expanded CUG repeat RNA, which folds into a hairpin structure containing GC base pairs and bulged, unpaired U residues. Together with RNA binding proteins RBPMS and RBFOX2, activates vascular smooth muscle cells alternative splicing events. Regulates NCOR2 alternative splicing. This Rattus norvegicus (Rat) protein is Muscleblind-like protein 1.